A 406-amino-acid chain; its full sequence is S-adenosylmethionine synthase (406 aa).

141-146 (GQGSMD) serves as a coordination point for ATP.

Belongs to the AdoMet synthase 2 family. Homodimer. Requires Mg(2+) as cofactor.

The enzyme catalyses L-methionine + ATP + H2O = S-adenosyl-L-methionine + phosphate + diphosphate. It functions in the pathway amino-acid biosynthesis; S-adenosyl-L-methionine biosynthesis; S-adenosyl-L-methionine from L-methionine: step 1/1. Functionally, catalyzes the formation of S-adenosylmethionine from methionine and ATP. The polypeptide is S-adenosylmethionine synthase (mat) (Methanocaldococcus jannaschii (strain ATCC 43067 / DSM 2661 / JAL-1 / JCM 10045 / NBRC 100440) (Methanococcus jannaschii)).